The following is a 550-amino-acid chain: Chaperonin GroEL (550 aa).

ATP is bound by residues 30-33 (TLGP), lysine 51, 87-91 (DGTTT), glycine 415, and aspartate 496. The interval 528-550 (EGGDMPAMPPGGMGGMGGMGGMM) is disordered. Residues 538 to 550 (GGMGGMGGMGGMM) show a composition bias toward gly residues.

It belongs to the chaperonin (HSP60) family. In terms of assembly, forms a cylinder of 14 subunits composed of two heptameric rings stacked back-to-back. Interacts with the co-chaperonin GroES.

The protein localises to the cytoplasm. The enzyme catalyses ATP + H2O + a folded polypeptide = ADP + phosphate + an unfolded polypeptide.. In terms of biological role, together with its co-chaperonin GroES, plays an essential role in assisting protein folding. The GroEL-GroES system forms a nano-cage that allows encapsulation of the non-native substrate proteins and provides a physical environment optimized to promote and accelerate protein folding. The sequence is that of Chaperonin GroEL from Chlorobium phaeobacteroides (strain BS1).